The primary structure comprises 491 residues: MNTQQLAKLRSIVPEMRRVRHIHFVGIGGAGMGGIAEVLANEGYQISGSDLAPNPVTQQLASLGATIYFNHRPENVRDASVVVVSSAISSDNPEIVAAHEARIPVIRRAEMLAELMRFRHGIAVAGTHGKTTTTAMVSSIYAEAGLDPTFVNGGLVKAAGVHARLGHSRYLIAEADESDASFLHLQPMVAIVTNIEADHMDTYQGDFENLKQTFINFLHNLPFYGRAVMCVDDPVIRELLPRVGRQTTTYGFSEDADVRVESYTQTGAQGHFTLARQDKELLHVTLNAPGRHNALNAAAAVAVATEEGIEDDDILRALESFQGTGRRFDFLGEYPLEPVNGKSGTAMLVDDYGHHPTEVDATIKAARAGWPDKNLVMLFQPHRYTRTRDLYDDFANVLCQVDALLMLDVYAAGEMPIPGADSRSLCRTIRGRGKVDPILVSDPAQAAEMLAQVLTGNDLILIQGAGNIGKIARNLSEIKLKPQTSGDEHHG.

126–132 contacts ATP; sequence GTHGKTT.

Belongs to the MurCDEF family.

It localises to the cytoplasm. The catalysed reaction is UDP-N-acetyl-alpha-D-muramate + L-alanine + ATP = UDP-N-acetyl-alpha-D-muramoyl-L-alanine + ADP + phosphate + H(+). It participates in cell wall biogenesis; peptidoglycan biosynthesis. Its function is as follows. Cell wall formation. In Enterobacter sp. (strain 638), this protein is UDP-N-acetylmuramate--L-alanine ligase.